Reading from the N-terminus, the 280-residue chain is tRNA (guanine-N(1)-)-methyltransferase (280 aa).

The segment at 71–94 (DDVSSGTASTQDLQSALPHLSKPR) is disordered. Residues 74 to 84 (SSGTASTQDLQ) show a composition bias toward polar residues. S-adenosyl-L-methionine-binding positions include G146 and 170 to 175 (IGDYVL).

The protein belongs to the RNA methyltransferase TrmD family. In terms of assembly, homodimer.

The protein localises to the cytoplasm. It carries out the reaction guanosine(37) in tRNA + S-adenosyl-L-methionine = N(1)-methylguanosine(37) in tRNA + S-adenosyl-L-homocysteine + H(+). In terms of biological role, specifically methylates guanosine-37 in various tRNAs. This Corynebacterium aurimucosum (strain ATCC 700975 / DSM 44827 / CIP 107346 / CN-1) (Corynebacterium nigricans) protein is tRNA (guanine-N(1)-)-methyltransferase.